Reading from the N-terminus, the 202-residue chain is Transmembrane 4 L6 family member 1 (202 aa).

Over 1–9 the chain is Cytoplasmic; sequence MCYGKCARC. A helical membrane pass occupies residues 10–30; it reads IGHSLVGLALLCIAANILLYF. The Extracellular segment spans residues 31–49; the sequence is PNGETKYASENHLSRFVWF. A helical membrane pass occupies residues 50–70; that stretch reads FSGIVGGGLLMLLPAFVFIGL. The Cytoplasmic portion of the chain corresponds to 71–93; sequence EQDDCCGCCGHENCGKRCAMLSS. Residues 94–114 traverse the membrane as a helical segment; sequence VLAALIGIAGSGYCVIVAALG. Over 115–161 the chain is Extracellular; it reads LAEGPLCLDSLGQWNYTFASTEGQYLLDTSTWSECTEPKHIVEWNVS. N-linked (GlcNAc...) asparagine glycosylation is found at asparagine 129 and asparagine 159. A helical transmembrane segment spans residues 162 to 182; the sequence is LFSILLALGGIEFILCLIQVI. Residues 183 to 202 are Cytoplasmic-facing; it reads NGVLGGICGFCCSHQQQYDC.

This sequence belongs to the L6 tetraspanin family. Present in high molecular weight complexes in tumor cells. Interacts with SDCBP2. In terms of tissue distribution, highly expressed in lung, breast, colon and ovarian carcinomas. It is also present on some normal cells, endothelial cells in particular.

The protein localises to the membrane. The protein is Transmembrane 4 L6 family member 1 (TM4SF1) of Homo sapiens (Human).